The primary structure comprises 501 residues: TGF-beta receptor type-1 (501 aa).

Residues 1 to 29 form the signal peptide; that stretch reads MEAASAALRRCLLLIVLVAAATLLPGAKA. Topologically, residues 30–124 are extracellular; sequence LQCFCHLCTK…QSAGLGPVEL (95 aa). Intrachain disulfides connect cysteine 32/cysteine 50, cysteine 34/cysteine 37, cysteine 44/cysteine 67, cysteine 82/cysteine 94, and cysteine 95/cysteine 100. N-linked (GlcNAc...) asparagine glycosylation is present at asparagine 41. Residues 125 to 145 traverse the membrane as a helical segment; sequence AAVIAGPVCFVCIALMLMVYI. Over 146–501 the chain is Cytoplasmic; the sequence is CHNRTVIHHR…QLSQQEGIKM (356 aa). A Phosphoserine modification is found at serine 163. The GS domain maps to 173-202; it reads TTLKDLIYDMTTSGSGSGLPLLVQRTIART. Phosphothreonine; by TGFBR2 is present on residues threonine 183 and threonine 184. 3 positions are modified to phosphoserine; by TGFBR2: serine 185, serine 187, and serine 189. Positions 191 to 192 match the FKBP1A-binding motif; it reads LP. In terms of domain architecture, Protein kinase spans 203 to 493; that stretch reads IVLQESIGKG…LRIKKTLSQL (291 aa). ATP is bound by residues 209–217 and lysine 230; that span reads IGKGRFGEV. Residue aspartate 331 is the Proton acceptor of the active site. Lysine 389 participates in a covalent cross-link: Glycyl lysine isopeptide (Lys-Gly) (interchain with G-Cter in SUMO).

Belongs to the protein kinase superfamily. TKL Ser/Thr protein kinase family. TGFB receptor subfamily. As to quaternary structure, homodimer; in the endoplasmic reticulum but also at the cell membrane. Heterohexamer; TGFB1, TGFB2 and TGFB3 homodimeric ligands assemble a functional receptor composed of two TGFBR1 and TGFBR2 heterodimers to form a ligand-receptor heterohexamer. The respective affinity of TGBRB1 and TGFBR2 for the ligands may modulate the kinetics of assembly of the receptor and may explain the different biological activities of TGFB1, TGFB2 and TGFB3. Component of a complex composed of TSC22D1 (via N-terminus), TGFBR1 and TGFBR2; the interaction between TSC22D1 and TGFBR1 is inhibited by SMAD7 and promoted by TGFB1. Interacts with CD109; inhibits TGF-beta receptor activation in keratinocytes. Interacts with RBPMS. Interacts with SMAD2, SMAD3 and ZFYVE9; ZFYVE9 recruits SMAD2 and SMAD3 to the TGF-beta receptor. Interacts with TRAF6 and MAP3K7; induces MAP3K7 activation by TRAF6. Interacts with PARD6A; involved in TGF-beta induced epithelial to mesenchymal transition. Interacts with NEDD4L. Interacts with SMAD7, SMURF1 and SMURF2; SMAD7 recruits NEDD4L, SMURF1 and SMURF2 to the TGF-beta receptor. Interacts with USP15 and VPS39. Interacts (unphosphorylated) with FKBP1A; prevents TGFBR1 phosphorylation by TGFBR2 and stabilizes it in the inactive conformation. Interacts with SDCBP (via C-terminus). Interacts with CAV1 and this interaction is impaired in the presence of SDCBP. Interacts with APPL1; interaction is TGF beta dependent; mediates trafficking of the TGFBR1 from the endosomes to the nucleus via microtubules in a TRAF6-dependent manner. Interacts with GPR50; this interaction promotes the constitutive activation of SMAD signaling pathway. The cofactor is Mg(2+). Mn(2+) serves as cofactor. Post-translationally, phosphorylated at basal levels in the absence of ligand. Activated upon phosphorylation by TGFBR2, mainly in the GS domain. Phosphorylation in the GS domain abrogates FKBP1A-binding. In terms of processing, N-Glycosylated. Ubiquitinated; undergoes ubiquitination catalyzed by several E3 ubiquitin ligases including SMURF1, SMURF2 and NEDD4L2. Results in the proteasomal and/or lysosomal degradation of the receptor thereby negatively regulating its activity. Deubiquitinated by USP15, leading to stabilization of the protein and enhanced TGF-beta signal. Its ubiquitination and proteasome-mediated degradation is negatively regulated by SDCBP. As to expression, urogenital ridge, testis, ovary, brain and lungs.

It is found in the cell membrane. Its subcellular location is the cell junction. The protein resides in the tight junction. The protein localises to the membrane raft. It localises to the cell surface. The enzyme catalyses L-threonyl-[receptor-protein] + ATP = O-phospho-L-threonyl-[receptor-protein] + ADP + H(+). It carries out the reaction L-seryl-[receptor-protein] + ATP = O-phospho-L-seryl-[receptor-protein] + ADP + H(+). Its activity is regulated as follows. Kept in an inactive conformation by FKBP1A preventing receptor activation in absence of ligand. CD109 is another inhibitor of the receptor. Its function is as follows. Transmembrane serine/threonine kinase forming with the TGF-beta type II serine/threonine kinase receptor, TGFBR2, the non-promiscuous receptor for the TGF-beta cytokines TGFB1, TGFB2 and TGFB3. Transduces the TGFB1, TGFB2 and TGFB3 signal from the cell surface to the cytoplasm and is thus regulating a plethora of physiological and pathological processes including cell cycle arrest in epithelial and hematopoietic cells, control of mesenchymal cell proliferation and differentiation, wound healing, extracellular matrix production, immunosuppression and carcinogenesis. The formation of the receptor complex composed of 2 TGFBR1 and 2 TGFBR2 molecules symmetrically bound to the cytokine dimer results in the phosphorylation and the activation of TGFBR1 by the constitutively active TGFBR2. Activated TGFBR1 phosphorylates SMAD2 which dissociates from the receptor and interacts with SMAD4. The SMAD2-SMAD4 complex is subsequently translocated to the nucleus where it modulates the transcription of the TGF-beta-regulated genes. This constitutes the canonical SMAD-dependent TGF-beta signaling cascade. Also involved in non-canonical, SMAD-independent TGF-beta signaling pathways. For instance, TGFBR1 induces TRAF6 autoubiquitination which in turn results in MAP3K7 ubiquitination and activation to trigger apoptosis. Also regulates epithelial to mesenchymal transition through a SMAD-independent signaling pathway through PARD6A phosphorylation and activation. This chain is TGF-beta receptor type-1 (Tgfbr1), found in Rattus norvegicus (Rat).